The sequence spans 421 residues: Dihydroorotase (421 aa).

The Zn(2+) site is built by His-60 and His-62. Substrate contacts are provided by residues 62 to 64 (HFR) and Asn-94. Residues Asp-151, His-178, and His-231 each contribute to the Zn(2+) site. A substrate-binding site is contributed by Asn-277. Asp-304 lines the Zn(2+) pocket. Asp-304 is an active-site residue. His-308 provides a ligand contact to substrate.

The protein belongs to the metallo-dependent hydrolases superfamily. DHOase family. Class I DHOase subfamily. Zn(2+) serves as cofactor.

It carries out the reaction (S)-dihydroorotate + H2O = N-carbamoyl-L-aspartate + H(+). It functions in the pathway pyrimidine metabolism; UMP biosynthesis via de novo pathway; (S)-dihydroorotate from bicarbonate: step 3/3. Catalyzes the reversible cyclization of carbamoyl aspartate to dihydroorotate. This Clostridioides difficile (strain 630) (Peptoclostridium difficile) protein is Dihydroorotase.